The sequence spans 330 residues: Phosphate acyltransferase (330 aa).

Belongs to the PlsX family. Homodimer. Probably interacts with PlsY.

It localises to the cytoplasm. The catalysed reaction is a fatty acyl-[ACP] + phosphate = an acyl phosphate + holo-[ACP]. It participates in lipid metabolism; phospholipid metabolism. Functionally, catalyzes the reversible formation of acyl-phosphate (acyl-PO(4)) from acyl-[acyl-carrier-protein] (acyl-ACP). This enzyme utilizes acyl-ACP as fatty acyl donor, but not acyl-CoA. The chain is Phosphate acyltransferase from Bacillus cereus (strain AH820).